The chain runs to 377 residues: Putative glutamate--cysteine ligase 2 (377 aa).

This sequence belongs to the glutamate--cysteine ligase type 2 family. YbdK subfamily.

It catalyses the reaction L-cysteine + L-glutamate + ATP = gamma-L-glutamyl-L-cysteine + ADP + phosphate + H(+). In terms of biological role, ATP-dependent carboxylate-amine ligase which exhibits weak glutamate--cysteine ligase activity. This is Putative glutamate--cysteine ligase 2 from Ralstonia pickettii (strain 12J).